The sequence spans 553 residues: Mucolipin-3 (553 aa).

Topologically, residues 1–62 (MANPEVLVSS…FWARGRKPWK (62 aa)) are cytoplasmic. The interaction with phosphoinositides stretch occupies residues 52 to 62 (KFWARGRKPWK). A helical membrane pass occupies residues 63 to 83 (LAIQILKIAMVTIQLVLFGLS). At 84-283 (NQMVVAFKEE…VSGSIQKNTH (200 aa)) the chain is on the extracellular side. Residues 104–118 (KGYMDRMDDTYAVYT) form an extracellular/lumenal pore loop region. Asn138 carries N-linked (GlcNAc...) asparagine glycosylation. An intrachain disulfide couples Cys159 to Cys185. Residue Asn205 is glycosylated (N-linked (GlcNAc...) asparagine). Residues Cys238 and Cys269 are joined by a disulfide bond. Residues 284-304 (YMMIFDAFVILTCLASLVLCA) traverse the membrane as a helical segment. Residues 305–341 (RSVIRGLQLQQEFVNFFLLHYKKEVSASDQMEFINGW) are Cytoplasmic-facing. Residues 342–362 (YIMIIISDILTIVGSVLKMEI) form a helical membrane-spanning segment. Residues 363–371 (QAKSLTSYD) are Extracellular-facing. A helical membrane pass occupies residues 372-392 (VCSILLGTSTMLVWLGVIRYL). At 393–414 (GFFAKYNLLILTLQAALPNVMR) the chain is on the cytoplasmic side. Residues 415-435 (FCCCAAMIYLGYCFCGWIVLG) form a helical membrane-spanning segment. The Extracellular segment spans residues 436–443 (PYHEKFRS). The pore-forming intramembrane region spans 444 to 464 (LNRVSECLFSLINGDDMFSTF). The short motif at 456–459 (NGDD) is the Selectivity filter element. The Extracellular segment spans residues 465–475 (AKMQQKSYLVW). The helical transmembrane segment at 476 to 497 (LFSRVYLYSFISLFIYMILSLF) threads the bilayer. Over 498–553 (IALITDTYETIKHYQQDGFPETELRKFIAECKDLPNSGKYRLEDDPPGSLLCCCKK) the chain is Cytoplasmic.

It belongs to the transient receptor (TC 1.A.4) family. Polycystin subfamily. MCOLN3 sub-subfamily. As to quaternary structure, homotetramer. Can heterooligomerize with MCOLN1; heteromeric assemblies have different channel properties as compared to the respective homooligomers and may be tissue-specific. May heterooligomerize with TRPV5 to form a functional distinct ion channel. Interacts with GABARAPL2. N-glycosylated. In terms of tissue distribution, expressed in the cochlea; particularly in the inner and outer hair cells (at protein level).

The protein resides in the early endosome membrane. Its subcellular location is the late endosome membrane. The protein localises to the cytoplasmic vesicle. It is found in the autophagosome membrane. It localises to the cell projection. The protein resides in the stereocilium membrane. The enzyme catalyses Ca(2+)(in) = Ca(2+)(out). The catalysed reaction is Mg(2+)(in) = Mg(2+)(out). It catalyses the reaction K(+)(in) = K(+)(out). It carries out the reaction Na(+)(in) = Na(+)(out). Channel activity is activated by PtdIns(3,5)P2 (phosphatidylinositol 3,5-bisphosphate). Inhibited by lumenal H(+) and Na(+). The channel pore shows dynamic behavior and undergoes spontaneous, Ca(2+)-dependent modulation when conducting Ca(2+). In terms of biological role, nonselective cation channel probably playing a role in the regulation of membrane trafficking events. Acts as a Ca(2+)-permeable cation channel with inwardly rectifying activity. Mediates release of Ca(2+) from endosomes to the cytoplasm, contributes to endosomal acidification and is involved in the regulation of membrane trafficking and fusion in the endosomal pathway. Also permeable to Mg(2+), Na(+) and K(+). Does not seem to act as mechanosensory transduction channel in inner ear sensory hair cells. Proposed to play a critical role at the cochlear stereocilia ankle-link region during hair-bundle growth. Involved in the regulation of autophagy. Through association with GABARAPL2 may be involved in autophagosome formation possibly providing Ca(2+) for the fusion process. Through a possible and probably tissue-specific heteromerization with MCOLN1 may be at least in part involved in many lysosome-dependent cellular events. Possible heteromeric ion channel assemblies with TRPV5 show pharmacological similarity with TRPML3. The protein is Mucolipin-3 (Mcoln3) of Mus musculus (Mouse).